Reading from the N-terminus, the 359-residue chain is UDP-N-acetylglucosamine--N-acetylmuramyl-(pentapeptide) pyrophosphoryl-undecaprenol N-acetylglucosamine transferase (359 aa).

UDP-N-acetyl-alpha-D-glucosamine contacts are provided by residues 13 to 15 (TAG), Asn-125, Arg-161, Ser-193, Ile-241, and Gln-285.

The protein belongs to the glycosyltransferase 28 family. MurG subfamily.

It is found in the cell membrane. It carries out the reaction di-trans,octa-cis-undecaprenyl diphospho-N-acetyl-alpha-D-muramoyl-L-alanyl-D-glutamyl-meso-2,6-diaminopimeloyl-D-alanyl-D-alanine + UDP-N-acetyl-alpha-D-glucosamine = di-trans,octa-cis-undecaprenyl diphospho-[N-acetyl-alpha-D-glucosaminyl-(1-&gt;4)]-N-acetyl-alpha-D-muramoyl-L-alanyl-D-glutamyl-meso-2,6-diaminopimeloyl-D-alanyl-D-alanine + UDP + H(+). Its pathway is cell wall biogenesis; peptidoglycan biosynthesis. In terms of biological role, cell wall formation. Catalyzes the transfer of a GlcNAc subunit on undecaprenyl-pyrophosphoryl-MurNAc-pentapeptide (lipid intermediate I) to form undecaprenyl-pyrophosphoryl-MurNAc-(pentapeptide)GlcNAc (lipid intermediate II). This chain is UDP-N-acetylglucosamine--N-acetylmuramyl-(pentapeptide) pyrophosphoryl-undecaprenol N-acetylglucosamine transferase, found in Corynebacterium diphtheriae (strain ATCC 700971 / NCTC 13129 / Biotype gravis).